Reading from the N-terminus, the 504-residue chain is Probable cytochrome P450 6a21 (504 aa).

Residue Cys449 participates in heme binding.

The protein belongs to the cytochrome P450 family. It depends on heme as a cofactor.

The protein localises to the endoplasmic reticulum membrane. It localises to the microsome membrane. Its function is as follows. May be involved in the metabolism of insect hormones and in the breakdown of synthetic insecticides. The chain is Probable cytochrome P450 6a21 (Cyp6a21) from Drosophila melanogaster (Fruit fly).